An 849-amino-acid polypeptide reads, in one-letter code: ATP-binding cassette sub-family B member 6 (849 aa).

At 1-25 (MVRLGSYCEHNGSISQAWLDSGLSP) the chain is on the lumenal side. The interval 1 to 195 (MVRLGSYCEH…TLFLFVLGIR (195 aa)) is required for the lysosomal targeting. The interval 1–227 (MVRLGSYCEH…SQPLLRDPNQ (227 aa)) is required for ATPase activity. A disulfide bridge connects residues Cys-8 and Cys-26. The N-linked (GlcNAc...) asparagine glycan is linked to Asn-11. The chain crosses the membrane as a helical span at residues 26–46 (CFYFTLVPSVLLSFSFLLGAL). Residues 47-72 (QSALYARHSTTMEPKYIPRSRLYRLQ) lie on the Cytoplasmic side of the membrane. Residues 73–93 (IVLSVVLILQSVIGLIWQAAG) form a helical membrane-spanning segment. Residues 94–98 (TDVVY) are Lumenal-facing. The chain crosses the membrane as a helical span at residues 99–119 (GYMIVHGCLSVVAWGFSLWLL). The Cytoplasmic segment spans residues 120–136 (HLERTRALVREKSRGHG). The chain crosses the membrane as a helical span at residues 137–157 (VVLLLFWALAFAAENLAFISW). At 158 to 173 (QSPNWWWLSRDTVPQK) the chain is on the lumenal side. A helical membrane pass occupies residues 174–194 (VQFGLWITRYVCTLFLFVLGI). At 195–254 (RAPGRPRKPYIVLINEDERDVETSQPLLRDPNQSTWQGFKKKLLLVMQYIWPRRNIPLQL) the chain is on the cytoplasmic side. A helical transmembrane segment spans residues 255–275 (LVALCMGLMGLERAINVFVPI). An ABC transmembrane type-1 domain is found at 256 to 547 (VALCMGLMGL…FGTYYRMIQS (292 aa)). Residues 276–291 (YAKKIVDGLTEDSTWN) lie on the Lumenal side of the membrane. A helical membrane pass occupies residues 292 to 312 (ILAVTVCIYVLLKFLQGGGAG). Topologically, residues 313–373 (TTGFLSNLRT…VDRGTSSINS (61 aa)) are cytoplasmic. The helical transmembrane segment at 374–394 (LLSYIVFSILPTIADIVIGIV) threads the bilayer. Over 395–401 (YFTSSFN) the chain is Lumenal. A helical membrane pass occupies residues 402-422 (AWFGLIIFVCMTLYLTLTIII). Over 423–492 (TEWRTKYRRE…ASLAMLNQTQ (70 aa)) the chain is Cytoplasmic. The chain crosses the membrane as a helical span at residues 493–513 (NLIIGLGLLAGSLLCAYFVTE). Residues 514–520 (NKFKVGD) lie on the Lumenal side of the membrane. Residues 521-541 (YVLFGTYIIQLYTPLNWFGTY) form a helical membrane-spanning segment. Over 542-849 (YRMIQSSFID…PPKATPRRGH (308 aa)) the chain is Cytoplasmic. The ABC transporter domain occupies 581–815 (IEFENVHFSY…GGVYAGMWQK (235 aa)). Residues Tyr-590 and 614 to 625 (GPSGSGKSTIIR) each bind ATP. The segment covering 814 to 825 (QKQQSGSESSSD) has biased composition (low complexity). A disordered region spans residues 814–849 (QKQQSGSESSSDSDSERKDRTSEKLQPPKATPRRGH). The segment covering 827 to 836 (DSERKDRTSE) has biased composition (basic and acidic residues).

It belongs to the ABC transporter superfamily. ABCB family. Heavy Metal importer (TC 3.A.1.210) subfamily. Homodimer. Post-translationally, N-glycosylated.

It localises to the cell membrane. The protein resides in the mitochondrion outer membrane. The protein localises to the endoplasmic reticulum membrane. It is found in the golgi apparatus membrane. Its subcellular location is the endosome membrane. It localises to the lysosome membrane. The protein resides in the late endosome membrane. The protein localises to the early endosome membrane. It is found in the secreted. Its subcellular location is the extracellular exosome. It localises to the mitochondrion. The protein resides in the endosome. The protein localises to the multivesicular body membrane. It is found in the melanosome membrane. The enzyme catalyses heme b(in) + ATP + H2O = heme b(out) + ADP + phosphate + H(+). The catalysed reaction is coproporphyrin III(in) + ATP + H2O = coproporphyrin III(out) + ADP + phosphate + H(+). It carries out the reaction pheophorbide a(in) + ATP + H2O = pheophorbide a(out) + ADP + phosphate + H(+). It catalyses the reaction coproporphyrinogen III(in) + ATP + H2O = coproporphyrinogen III(out) + ADP + phosphate + H(+). The enzyme catalyses protoporphyrin IX(in) + ATP + H2O = protoporphyrin IX(out) + ADP + phosphate + H(+). The catalysed reaction is coproporphyrin I(in) + ATP + H2O = coproporphyrin I(out) + ADP + phosphate + H(+). It carries out the reaction uroporphyrin I(in) + ATP + H2O = uroporphyrin I(out) + ADP + phosphate + H(+). It catalyses the reaction uroporphyrin III(in) + ATP + H2O = uroporphyrin III(out) + ADP + phosphate + H(+). Its function is as follows. ATP-dependent transporter that catalyzes the transport of a broad-spectrum of porphyrins from the cytoplasm to the extracellular space through the plasma membrane or into the vesicle lumen. May also function as an ATP-dependent importer of porphyrins from the cytoplasm into the mitochondria, in turn may participate in the de novo heme biosynthesis regulation and in the coordination of heme and iron homeostasis during phenylhydrazine stress. May also play a key role in the early steps of melanogenesis producing PMEL amyloid fibrils. In vitro, it confers to cells a resistance to toxic metal such as arsenic and cadmium and against chemotherapeutics agent such as 5-fluorouracil, SN-38 and vincristin. In addition may play a role in the transition metal homeostasis. This chain is ATP-binding cassette sub-family B member 6 (abcb6), found in Xenopus tropicalis (Western clawed frog).